The following is a 510-amino-acid chain: Lysine--tRNA ligase (510 aa).

2 residues coordinate Mg(2+): glutamate 420 and glutamate 427.

Belongs to the class-II aminoacyl-tRNA synthetase family. Homodimer. The cofactor is Mg(2+).

The protein localises to the cytoplasm. The enzyme catalyses tRNA(Lys) + L-lysine + ATP = L-lysyl-tRNA(Lys) + AMP + diphosphate. This Psychrobacter sp. (strain PRwf-1) protein is Lysine--tRNA ligase.